An 86-amino-acid polypeptide reads, in one-letter code: Centromere protein W (86 aa).

The protein belongs to the CENP-W/WIP1 family. Heterodimer with CENPT; this dimer coassembles with CENPS-CENPX heterodimers at centromeres to form the tetrameric CENP-T-W-S-X complex, which is a subcomplex of the large constitutive centromere-associated network (CCAN, also known as the interphase centromere complex or ICEN). Interacts with NPM1.

It localises to the nucleus. It is found in the chromosome. Its subcellular location is the centromere. The protein localises to the kinetochore. The protein resides in the nucleus matrix. It localises to the nucleolus. In terms of biological role, component of the CENPA-NAC (nucleosome-associated) complex, a complex that plays a central role in assembly of kinetochore proteins, mitotic progression and chromosome segregation. The CENPA-NAC complex recruits the CENPA-CAD (nucleosome distal) complex and may be involved in incorporation of newly synthesized CENPA into centromeres. Part of a nucleosome-associated complex that binds specifically to histone H3-containing nucleosomes at the centromere, as opposed to nucleosomes containing CENPA. Component of the heterotetrameric CENP-T-W-S-X complex that binds and supercoils DNA, and plays an important role in kinetochore assembly. CENPW has a fundamental role in kinetochore assembly and function. It is one of the inner kinetochore proteins, with most further proteins binding downstream. Required for normal chromosome organization and normal progress through mitosis. The polypeptide is Centromere protein W (Cenpw) (Mus musculus (Mouse)).